The sequence spans 533 residues: DELLA protein GAI (533 aa).

Basic residues predominate over residues 1-12 (MKRDHHHHHHQD). The segment at 1–24 (MKRDHHHHHHQDKKTMMMNEEDDG) is disordered. Positions 28-32 (DELLA) match the DELLA motif motif. The LEXLE motif motif lies at 50–54 (LEQLE). Residues 73–77 (VHYNP) carry the VHYNP motif motif. The GRAS domain occupies 160 to 529 (VDSQENGVRL…RPLIATSAWK (370 aa)). The segment at 167–221 (VRLVHALLACAEAVQKENLTVAEALVKQIGFLAVSQIGAMRKVATYFAEALARRI) is leucine repeat I (LRI). A LxCxE motif motif is present at residues 174-178 (LACAE). The VHIID stretch occupies residues 240-305 (QMHFYETCPY…GGPPVFRLTG (66 aa)). Positions 271-275 (VHVID) match the VHIID motif. Positions 319–351 (EVGCKLAHLAEAIHVEFEYRGFVANTLADLDAS) are leucine repeat II (LRII). The tract at residues 363–450 (VAVNSVFELH…EVYLGKQICN (88 aa)) is PFYRE. Residues 371–375 (LHKLL) carry the LXXLL motif motif. Residues 453 to 529 (ACDGPDRVER…RPLIATSAWK (77 aa)) form an SAW region.

Belongs to the GRAS family. DELLA subfamily. In terms of assembly, interacts directly with the GID2/SLY1 component of the SCF(GID2) complex. Interacts (via N-terminus) with GID1A, GID1B and GID1B (via N-terminus). Interacts with the BOI proteins BOI, BRG1, BRG2, BRG3 and NUP58. Interacts with TOPP4. Interacts with TCP14 and TCP15. Interacts with FLZ5. Binds to and coactivates GAF1/IDD2 and ENY/IDD1 at the promoter of GA20OX2 gene. Binds to PDF2 and ATML1. Interacts with the prefoldin alpha subunits PFD3 and PFD5 in the nucleus. In terms of processing, phosphorylated. Post-translationally, gibberellin (GA) induces dephosphorylation of GAI by TOPP4 and subsequent degradation by the proteasomal pathway. May be ubiquitinated, as suggested by its interaction with GID2. Ubiquitination is however unsure since in contrast to other DELLA proteins, it is not ubiquitinated and degraded upon GA application. Nevertheless, ubiquitination may be triggered by other processes. Ubiquitously expressed. Expressed in rosette leaves, roots, stems and inflorescences of greenhouse grown.

It is found in the nucleus. With respect to regulation, transcription activation is repressed by gibberellic acid GA(3) in the presence of TPR4. Its function is as follows. Transcriptional regulator that acts as a repressor of the gibberellin (GA) signaling pathway. Transcription coactivator of the zinc finger transcription factors GAF1/IDD2 and ENY/IDD1 in regulation of gibberellin homeostasis and signaling. No effect of the BOI proteins on its stability. Probably acts by participating in large multiprotein complexes that repress transcription of GA-inducible genes. Positively regulates XERICO expression. In contrast to RGA, it is less sensitive to GA. Its activity is probably regulated by other phytohormones such as auxin and ethylene. Involved in the regulation of seed dormancy and germination, including glucose-induced delay of seed germination. Involved in the process leading to microtubules (MTs) dissociation in response to gibberellic acid (GA) probably by mediating the translocation of the prefoldin co-chaperone complex from the cytoplasm to the nucleus. This chain is DELLA protein GAI, found in Arabidopsis thaliana (Mouse-ear cress).